Here is a 279-residue protein sequence, read N- to C-terminus: Putative hydroxypyruvate isomerase (279 aa).

Active-site proton donor/acceptor residues include glutamate 155 and glutamate 256. A disordered region spans residues 260–279 (GDDPSAQSFSWLPAGARAAR).

This sequence belongs to the hyi family.

It carries out the reaction 3-hydroxypyruvate = 2-hydroxy-3-oxopropanoate. In terms of biological role, catalyzes the reversible isomerization between hydroxypyruvate and 2-hydroxy-3-oxopropanoate (also termed tartronate semialdehyde). The chain is Putative hydroxypyruvate isomerase from Streptomyces coelicolor (strain ATCC BAA-471 / A3(2) / M145).